Consider the following 368-residue polypeptide: Phospho-N-acetylmuramoyl-pentapeptide-transferase (368 aa).

A run of 10 helical transmembrane segments spans residues 31–51 (LTSM…LYGL), 73–93 (TMGG…WGNL), 98–118 (VILL…DDYM), 134–154 (FILS…YTGT), 175–195 (GPVI…IIGS), 213–233 (VLIS…PIVA), 249–269 (VFLS…AHPA), 271–291 (VFMG…IVIL), 296–316 (ILLL…ILQV), and 345–365 (KIVI…LSTL).

Belongs to the glycosyltransferase 4 family. MraY subfamily. The cofactor is Mg(2+).

The protein localises to the cell inner membrane. It catalyses the reaction UDP-N-acetyl-alpha-D-muramoyl-L-alanyl-gamma-D-glutamyl-meso-2,6-diaminopimeloyl-D-alanyl-D-alanine + di-trans,octa-cis-undecaprenyl phosphate = di-trans,octa-cis-undecaprenyl diphospho-N-acetyl-alpha-D-muramoyl-L-alanyl-D-glutamyl-meso-2,6-diaminopimeloyl-D-alanyl-D-alanine + UMP. The protein operates within cell wall biogenesis; peptidoglycan biosynthesis. Functionally, catalyzes the initial step of the lipid cycle reactions in the biosynthesis of the cell wall peptidoglycan: transfers peptidoglycan precursor phospho-MurNAc-pentapeptide from UDP-MurNAc-pentapeptide onto the lipid carrier undecaprenyl phosphate, yielding undecaprenyl-pyrophosphoryl-MurNAc-pentapeptide, known as lipid I. This is Phospho-N-acetylmuramoyl-pentapeptide-transferase from Leptospira interrogans serogroup Icterohaemorrhagiae serovar copenhageni (strain Fiocruz L1-130).